The sequence spans 756 residues: MDLRTMTQSLVTLAEDNMAFFSSQGPGETARRLTGVFAGIREQALGLEPALGRLLSVAHLFDLDTETPANGYRSLVHTARCCLAHLLHKSRYVASNRRSIFFRTSHNLAELEAYLAALTQLRALAYYAQRLLTTNQPGRLFFEGDERVIADFLREYVTLHKGCFYGRCLGFQFTPAIRPFLQTISIGLVSFGEHYKRNETGISVTASSLFTDGRFAIDPELRGAEFERIIQNLDVHFWKAFWNITEIQVLSSLANMASTTVRVSRLLSLPPVAFEMPLTSDPELTVTISPPLAHTGPGPVLVRLISYDLREGQDSKELSSFVRSEGPRSLELRLRPQQAPRSRALVVHIHGGGFVAQTSKSHEPYLKSWAQELGAPILSIDYSLAPEAPFPRALEECFYAYCWAVKHCALLGSTGERICLAGDSAGGNLCFTVSLRAAAYGVRVPDGIMAAYPATMLQSTASPSRLLSLMDHLLPLSVLSKCVSTYAGAETEDHPDSDQKALGVMGLVQRDTALLLRDLRLGASSWLNSFLELGGQKSHLKSVSKTEPMRRSVSEAALTQPEGSLGTDSLKSLKLHDLGLRNSSDTTDTPELSLSAETLGPSAPSTINFLLGSEDGSEMSKAPEELNNKDRVRGVGAAFPEGFHPRRCSQGAMWMPLYSAPIVKNPSMSPLLAPDSMLQTLPPVHIVACALDPMLDDSVMFARRLRGLGQPVTLRVAEDLPHGFLSLAALCRETRQAAALCVERIRLILNLPGPPV.

An Involved in the stabilization of the negatively charged intermediate by the formation of the oxyanion hole motif is present at residues 350–352 (HGG). The active site involves S424. Disordered regions lie at residues 542–570 (SVSKTEPMRRSVSEAALTQPEGSLGTDSL) and 581–600 (RNSSDTTDTPELSLSAETLG). The residue at position 552 (S552) is a Phosphoserine; by PKA. Position 554 is a phosphoserine; by AMPK (S554). Residues 581–596 (RNSSDTTDTPELSLSA) are compositionally biased toward polar residues. S595 and S649 each carry phosphoserine. Residues D692 and H722 contribute to the active site.

It belongs to the 'GDXG' lipolytic enzyme family. As to quaternary structure, monomer and homodimer. Interacts with CAVIN1 in the adipocyte cytoplasm. Interacts with PLIN5. Post-translationally, phosphorylation by AMPK reduces its translocation towards the lipid droplets.

It is found in the cell membrane. The protein localises to the membrane. The protein resides in the caveola. It localises to the cytoplasm. Its subcellular location is the cytosol. It is found in the lipid droplet. It carries out the reaction a diacylglycerol + H2O = a monoacylglycerol + a fatty acid + H(+). The catalysed reaction is a triacylglycerol + H2O = a diacylglycerol + a fatty acid + H(+). It catalyses the reaction a monoacylglycerol + H2O = glycerol + a fatty acid + H(+). The enzyme catalyses Hydrolyzes glycerol monoesters of long-chain fatty acids.. It carries out the reaction 1,2-di-(9Z-octadecenoyl)-glycerol + (9Z)-octadecenoate + H(+) = 1,2,3-tri-(9Z-octadecenoyl)-glycerol + H2O. The catalysed reaction is 2,3-di-(9Z)-octadecenoyl-sn-glycerol + H2O = 2-(9Z-octadecenoyl)-glycerol + (9Z)-octadecenoate + H(+). It catalyses the reaction cholesteryl (9Z-octadecenoate) + H2O = cholesterol + (9Z)-octadecenoate + H(+). The enzyme catalyses 1,2,3-tri-(9Z-octadecenoyl)-glycerol + H2O = di-(9Z)-octadecenoylglycerol + (9Z)-octadecenoate + H(+). It carries out the reaction all-trans-retinyl hexadecanoate + H2O = all-trans-retinol + hexadecanoate + H(+). The catalysed reaction is 1,2-di-(9Z-octadecenoyl)-glycerol + H2O = (9Z-octadecenoyl)-glycerol + (9Z)-octadecenoate + H(+). It catalyses the reaction 2-(5Z,8Z,11Z,14Z-eicosatetraenoyl)-glycerol + H2O = glycerol + (5Z,8Z,11Z,14Z)-eicosatetraenoate + H(+). The enzyme catalyses 1-(9Z-octadecenoyl)-glycerol + H2O = glycerol + (9Z)-octadecenoate + H(+). It carries out the reaction 2-(9Z-octadecenoyl)-glycerol + H2O = glycerol + (9Z)-octadecenoate + H(+). The catalysed reaction is 1-O-hexadecyl-2-acetyl-sn-glycerol + H2O = 1-O-hexadecyl-sn-glycerol + acetate + H(+). It catalyses the reaction 1,2-di-(9Z-octadecenoyl)-sn-glycerol + H2O = (9Z-octadecenoyl)-glycerol + (9Z)-octadecenoate + H(+). The enzyme catalyses 1,3-di-(9Z-octadecenoyl)-glycerol + H2O = 1-(9Z-octadecenoyl)-glycerol + (9Z)-octadecenoate + H(+). It carries out the reaction 1,2-di-(9Z-octadecenoyl)-glycerol + H2O = 2-(9Z-octadecenoyl)-glycerol + (9Z)-octadecenoate + H(+). The protein operates within glycerolipid metabolism; triacylglycerol degradation. In terms of biological role, lipase with broad substrate specificity, catalyzing the hydrolysis of triacylglycerols (TAGs), diacylglycerols (DAGs), monoacylglycerols (MAGs), cholesteryl esters and retinyl esters. Shows a preferential hydrolysis of DAGs over TAGs and MAGs. Preferentially hydrolyzes fatty acid (FA) esters at the sn-3 position of the glycerol backbone in DAGs and FA esters at the sn-1 and sn-2 positions of the glycerol backbone in TAGs. Catalyzes the hydrolysis of 2-arachidonoylglycerol, an endocannabinoid and of 2-acetyl monoalkylglycerol ether, the penultimate precursor of the pathway for de novo synthesis of platelet-activating factor. In adipose tissue and heart, it primarily hydrolyzes stored triglycerides to free fatty acids, while in steroidogenic tissues, it principally converts cholesteryl esters to free cholesterol for steroid hormone production. This chain is Hormone-sensitive lipase (LIPE), found in Bos taurus (Bovine).